Here is a 123-residue protein sequence, read N- to C-terminus: Immunoglobulin lambda variable 9-49 (123 aa).

Residues 1 to 19 form the signal peptide; that stretch reads MAWAPLLLTLLSLLTGSLS. Residues 20–44 are framework-1; sequence QPVLTQPPSASASLGASVTLTCTLS. The Ig-like domain maps to 21–123; that stretch reads PVLTQPPSAS…ADHGSGSNFV (103 aa). The cysteines at positions 41 and 112 are disulfide-linked. The tract at residues 45–51 is complementarity-determining-1; sequence SGYSNYK. Positions 52–68 are framework-2; the sequence is VDWYQQRPGKGPRFVMR. The interval 69–76 is complementarity-determining-2; the sequence is VGTGGIVG. The tract at residues 77–112 is framework-3; it reads SKGDGIPDRFSVLGSGLNRYLTIKNIQEEDESDYHC. Tyr-96 is modified (phosphotyrosine). Thr-98 carries the post-translational modification Phosphothreonine. The interval 113–123 is complementarity-determining-3; the sequence is GADHGSGSNFV.

In terms of assembly, immunoglobulins are composed of two identical heavy chains and two identical light chains; disulfide-linked.

The protein resides in the secreted. It localises to the cell membrane. Its function is as follows. V region of the variable domain of immunoglobulin light chains that participates in the antigen recognition. Immunoglobulins, also known as antibodies, are membrane-bound or secreted glycoproteins produced by B lymphocytes. In the recognition phase of humoral immunity, the membrane-bound immunoglobulins serve as receptors which, upon binding of a specific antigen, trigger the clonal expansion and differentiation of B lymphocytes into immunoglobulins-secreting plasma cells. Secreted immunoglobulins mediate the effector phase of humoral immunity, which results in the elimination of bound antigens. The antigen binding site is formed by the variable domain of one heavy chain, together with that of its associated light chain. Thus, each immunoglobulin has two antigen binding sites with remarkable affinity for a particular antigen. The variable domains are assembled by a process called V-(D)-J rearrangement and can then be subjected to somatic hypermutations which, after exposure to antigen and selection, allow affinity maturation for a particular antigen. This chain is Immunoglobulin lambda variable 9-49, found in Homo sapiens (Human).